The primary structure comprises 135 residues: Large ribosomal subunit protein uL16c (135 aa).

It belongs to the universal ribosomal protein uL16 family. As to quaternary structure, part of the 50S ribosomal subunit.

It is found in the plastid. Its subcellular location is the chloroplast. The chain is Large ribosomal subunit protein uL16c from Lactuca sativa (Garden lettuce).